A 198-amino-acid chain; its full sequence is Recombination protein RecR (198 aa).

The C4-type zinc finger occupies 57-72 (CSVCGHITDQDPCYIC). The region spanning 80–175 (SVICVVQDPK…KLSRIAHGLP (96 aa)) is the Toprim domain.

This sequence belongs to the RecR family.

Functionally, may play a role in DNA repair. It seems to be involved in an RecBC-independent recombinational process of DNA repair. It may act with RecF and RecO. The polypeptide is Recombination protein RecR (Bacillus licheniformis (strain ATCC 14580 / DSM 13 / JCM 2505 / CCUG 7422 / NBRC 12200 / NCIMB 9375 / NCTC 10341 / NRRL NRS-1264 / Gibson 46)).